A 133-amino-acid chain; its full sequence is Large-conductance mechanosensitive channel (133 aa).

The next 2 helical transmembrane spans lie at Ala17–Phe37 and Ile73–Ala93.

The protein belongs to the MscL family. Homopentamer.

The protein resides in the cell inner membrane. Channel that opens in response to stretch forces in the membrane lipid bilayer. May participate in the regulation of osmotic pressure changes within the cell. This Synechococcus elongatus (strain ATCC 33912 / PCC 7942 / FACHB-805) (Anacystis nidulans R2) protein is Large-conductance mechanosensitive channel.